The primary structure comprises 341 residues: Ketol-acid reductoisomerase (NADP(+)) (341 aa).

The 182-residue stretch at M1–T182 folds into the KARI N-terminal Rossmann domain. Residues Y25–Q28, S51, S53, and D83–Q86 contribute to the NADP(+) site. H108 is an active-site residue. G134 contacts NADP(+). Residues T183 to I328 form the KARI C-terminal knotted domain. Mg(2+)-binding residues include D191, E195, E227, and E231. Position 252 (S252) interacts with substrate.

Belongs to the ketol-acid reductoisomerase family. The cofactor is Mg(2+).

The catalysed reaction is (2R)-2,3-dihydroxy-3-methylbutanoate + NADP(+) = (2S)-2-acetolactate + NADPH + H(+). It carries out the reaction (2R,3R)-2,3-dihydroxy-3-methylpentanoate + NADP(+) = (S)-2-ethyl-2-hydroxy-3-oxobutanoate + NADPH + H(+). The protein operates within amino-acid biosynthesis; L-isoleucine biosynthesis; L-isoleucine from 2-oxobutanoate: step 2/4. Its pathway is amino-acid biosynthesis; L-valine biosynthesis; L-valine from pyruvate: step 2/4. In terms of biological role, involved in the biosynthesis of branched-chain amino acids (BCAA). Catalyzes an alkyl-migration followed by a ketol-acid reduction of (S)-2-acetolactate (S2AL) to yield (R)-2,3-dihydroxy-isovalerate. In the isomerase reaction, S2AL is rearranged via a Mg-dependent methyl migration to produce 3-hydroxy-3-methyl-2-ketobutyrate (HMKB). In the reductase reaction, this 2-ketoacid undergoes a metal-dependent reduction by NADPH to yield (R)-2,3-dihydroxy-isovalerate. The chain is Ketol-acid reductoisomerase (NADP(+)) from Anaeromyxobacter sp. (strain K).